The sequence spans 231 residues: Small ribosomal subunit protein uS2 (231 aa).

The segment at 1–23 (MKVTNLSEKEERGGELTEAEKEE) is disordered. The span at 7 to 23 (SEKEERGGELTEAEKEE) shows a compositional bias: basic and acidic residues.

This sequence belongs to the universal ribosomal protein uS2 family.

In Saccharolobus solfataricus (strain ATCC 35092 / DSM 1617 / JCM 11322 / P2) (Sulfolobus solfataricus), this protein is Small ribosomal subunit protein uS2 (rps2).